Here is a 373-residue protein sequence, read N- to C-terminus: Indole glucosinolate O-methyltransferase 3 (373 aa).

S-adenosyl-L-homocysteine contacts are provided by glycine 217, aspartate 240, aspartate 260, methionine 261, and lysine 274. Residue histidine 278 is the Proton acceptor of the active site.

The protein belongs to the class I-like SAM-binding methyltransferase superfamily. Cation-independent O-methyltransferase family.

It participates in secondary metabolite biosynthesis. Its function is as follows. Involved in indole glucosinolate biosynthesis. Catalyzes methoxylation reactions of the glucosinolate indole ring. Converts the hydroxy intermediates 4-hydroxy-indol-3-yl-methylglucosinolate (4OH-I3M) and 1-hydroxy-indol-3-yl-methylglucosinolate (1OH-I3M) to 4-methoxy-indol-3-yl-methylglucosinolate (4MO-I3M) and 1-methoxy-indol-3-yl-methylglucosinolate(1MO-I3M), respectively. The polypeptide is Indole glucosinolate O-methyltransferase 3 (Arabidopsis thaliana (Mouse-ear cress)).